Reading from the N-terminus, the 295-residue chain is Nitrogenase iron protein 1 (295 aa).

12 to 19 serves as a coordination point for ATP; it reads GKGGIGKS. Residue C100 participates in [4Fe-4S] cluster binding. The residue at position 103 (R103) is an ADP-ribosylarginine; by dinitrogenase reductase ADP-ribosyltransferase. C134 is a binding site for [4Fe-4S] cluster.

This sequence belongs to the NifH/BchL/ChlL family. In terms of assembly, homodimer. [4Fe-4S] cluster serves as cofactor. In terms of processing, the reversible ADP-ribosylation of Arg-103 inactivates the nitrogenase reductase and regulates nitrogenase activity.

The catalysed reaction is N2 + 8 reduced [2Fe-2S]-[ferredoxin] + 16 ATP + 16 H2O = H2 + 8 oxidized [2Fe-2S]-[ferredoxin] + 2 NH4(+) + 16 ADP + 16 phosphate + 6 H(+). Its function is as follows. The key enzymatic reactions in nitrogen fixation are catalyzed by the nitrogenase complex, which has 2 components: the iron protein and the molybdenum-iron protein. The protein is Nitrogenase iron protein 1 (nifH1) of Mastigocladus laminosus (Fischerella sp.).